Consider the following 1177-residue polypeptide: Lysylphosphatidylglycerol biosynthesis bifunctional protein LysX (1177 aa).

Disordered stretches follow at residues 1 to 40 (MRRA…AKFV) and 61 to 85 (VTLA…PRNR). The tract at residues 1–676 (MRRAGRSRQF…LLHHDGSAPD (676 aa)) is phosphatidylglycerol lysyltransferase. The segment covering 65–85 (SPGSRSGSGPRSGPRLGPRNR) has biased composition (low complexity). 6 consecutive transmembrane segments (helical) span residues 93–113 (VPAA…LGSV), 135–155 (FPDT…ALTA), 159–179 (IAWL…VADI), 189–209 (IFGE…LVLA), 227–247 (AVLV…VELF), and 281–301 (VFLN…ATIV). Residues 673 to 693 (SAPDVSGLRPERTDAEEARSR) are disordered. Positions 677–1177 (VSGLRPERTD…TLPFPLAKPH (501 aa)) are lysine--tRNA ligase. The span at 681–693 (RPERTDAEEARSR) shows a compositional bias: basic and acidic residues. The OB DNA-binding region spans 738 to 816 (ITVAGRILRI…SLIVTDWRMI (79 aa)). Positions 1089 and 1096 each coordinate Mg(2+).

The protein in the N-terminal section; belongs to the LPG synthetase family. This sequence in the C-terminal section; belongs to the class-II aminoacyl-tRNA synthetase family. Mg(2+) is required as a cofactor.

The protein resides in the cell membrane. It catalyses the reaction tRNA(Lys) + L-lysine + ATP = L-lysyl-tRNA(Lys) + AMP + diphosphate. The catalysed reaction is L-lysyl-tRNA(Lys) + a 1,2-diacyl-sn-glycero-3-phospho-(1'-sn-glycerol) = a 1,2-diacyl-sn-glycero-3-phospho-1'-(3'-O-L-lysyl)-sn-glycerol + tRNA(Lys). In terms of biological role, catalyzes the production of L-lysyl-tRNA(Lys)transfer and the transfer of a lysyl group from L-lysyl-tRNA(Lys) to membrane-bound phosphatidylglycerol (PG), which produces lysylphosphatidylglycerol (LPG), one of the components of the bacterial membrane with a positive net charge. LPG synthesis contributes to the resistance to cationic antimicrobial peptides (CAMPs) and likely protects M.tuberculosis against the CAMPs produced by competiting microorganisms (bacteriocins). In fact, the modification of anionic phosphatidylglycerol with positively charged L-lysine results in repulsion of the peptides. The chain is Lysylphosphatidylglycerol biosynthesis bifunctional protein LysX (lysX) from Mycolicibacterium paratuberculosis (strain ATCC BAA-968 / K-10) (Mycobacterium paratuberculosis).